The chain runs to 312 residues: 4-diphosphocytidyl-2-C-methyl-D-erythritol kinase (312 aa).

Lys10 is an active-site residue. Position 105–115 (105–115 (PVAGGMAGGSA)) interacts with ATP. Residue Asp146 is part of the active site.

It belongs to the GHMP kinase family. IspE subfamily.

The enzyme catalyses 4-CDP-2-C-methyl-D-erythritol + ATP = 4-CDP-2-C-methyl-D-erythritol 2-phosphate + ADP + H(+). It participates in isoprenoid biosynthesis; isopentenyl diphosphate biosynthesis via DXP pathway; isopentenyl diphosphate from 1-deoxy-D-xylulose 5-phosphate: step 3/6. Catalyzes the phosphorylation of the position 2 hydroxy group of 4-diphosphocytidyl-2C-methyl-D-erythritol. The polypeptide is 4-diphosphocytidyl-2-C-methyl-D-erythritol kinase (Corynebacterium glutamicum (strain R)).